Consider the following 64-residue polypeptide: Prokaryotic ubiquitin-like protein Pup (64 aa).

Over residues 1 to 11 the composition is skewed to basic and acidic residues; it reads MAQEQTKRGGG. The disordered stretch occupies residues 1 to 36; that stretch reads MAQEQTKRGGGGDDDDVTDLGGPAGQERREKLAEDT. Residues 21–58 are ARC ATPase binding; that stretch reads GGPAGQERREKLAEDTDDLLDEIDDVLEENAEDFVRAY. The stretch at 24-52 forms a coiled coil; it reads AGQERREKLAEDTDDLLDEIDDVLEENAE. Deamidated glutamine is present on glutamine 64. Glutamine 64 is covalently cross-linked (Isoglutamyl lysine isopeptide (Gln-Lys) (interchain with K-? in acceptor proteins)).

It belongs to the prokaryotic ubiquitin-like protein family. Strongly interacts with the proteasome-associated ATPase ARC through a hydrophobic interface; the interacting region of Pup lies in its C-terminal half. There is one Pup binding site per ARC hexamer ring. Is modified by deamidation of its C-terminal glutamine to glutamate by the deamidase Dop, a prerequisite to the subsequent pupylation process.

It participates in protein degradation; proteasomal Pup-dependent pathway. Its function is as follows. Protein modifier that is covalently attached to lysine residues of substrate proteins, thereby targeting them for proteasomal degradation. The tagging system is termed pupylation. This chain is Prokaryotic ubiquitin-like protein Pup, found in Mycobacteroides abscessus (strain ATCC 19977 / DSM 44196 / CCUG 20993 / CIP 104536 / JCM 13569 / NCTC 13031 / TMC 1543 / L948) (Mycobacterium abscessus).